We begin with the raw amino-acid sequence, 125 residues long: Protein Bouncer (125 aa).

A signal peptide spans methionine 1–proline 18. 5 cysteine pairs are disulfide-bonded: cysteine 23–cysteine 48, cysteine 26–cysteine 35, cysteine 42–cysteine 66, cysteine 72–cysteine 91, and cysteine 92–cysteine 97. One can recognise a UPAR/Ly6 domain in the interval cysteine 23 to asparagine 98. N-linked (GlcNAc...) asparagine glycosylation occurs at asparagine 32. The N-linked (GlcNAc...) asparagine glycan is linked to asparagine 84. A lipid anchor (GPI-anchor amidated asparagine) is attached at asparagine 98. Positions serine 99 to leucine 125 are cleaved as a propeptide — removed in mature form.

The protein belongs to the SPACA4/bouncer family. As to quaternary structure, interacts with spermatocyte complex composed of izumo1, spaca6 and tmem81. In terms of processing, N-glycosylated. In terms of tissue distribution, highly expressed in oocytes. Not expressed in testis.

The protein resides in the cell membrane. In terms of biological role, oocyte-expressed fertilization factor that mediates sperm-egg binding and is essential for sperm entry into the egg. Necessary and sufficient to mediate species-specific gamete recognition and fertilization, which is essential for vertebrate species performing external fertilization. External fertilization cannot guarantee that only conspecific sperm reaches the egg by precopulatory mate choice: proteins such as Bouncer can therefore support the selection of conspecific sperm. The chain is Protein Bouncer from Danio rerio (Zebrafish).